Here is a 416-residue protein sequence, read N- to C-terminus: Phosphatidylserine decarboxylase proenzyme, mitochondrial (416 aa).

Over 1–67 (MPGKSTRPLP…GRLHFPQLAL (67 aa)) the chain is Mitochondrial matrix. The helical transmembrane segment at 68–86 (RRRLGQLSCMSKPALKLRS) threads the bilayer. Residues 87-416 (WPLTVLYYLL…IRFGEALGSL (330 aa)) are Mitochondrial intermembrane-facing. Active-site charge relay system; for autoendoproteolytic cleavage activity residues include Asp-198, His-274, and Ser-385. Ser-385 acts as the Schiff-base intermediate with substrate; via pyruvic acid; for decarboxylase activity in catalysis. At Ser-385 the chain carries Pyruvic acid (Ser); by autocatalysis.

The protein belongs to the phosphatidylserine decarboxylase family. PSD-B subfamily. Eukaryotic type I sub-subfamily. In terms of assembly, heterodimer of a large membrane-associated beta subunit and a small pyruvoyl-containing alpha subunit. Pyruvate serves as cofactor. Is synthesized initially as an inactive proenzyme. Formation of the active enzyme involves a self-maturation process in which the active site pyruvoyl group is generated from an internal serine residue via an autocatalytic post-translational modification. Two non-identical subunits are generated from the proenzyme in this reaction, and the pyruvate is formed at the N-terminus of the alpha chain, which is derived from the carboxyl end of the proenzyme. The autoendoproteolytic cleavage occurs by a canonical serine protease mechanism, in which the side chain hydroxyl group of the serine supplies its oxygen atom to form the C-terminus of the beta chain, while the remainder of the serine residue undergoes an oxidative deamination to produce ammonia and the pyruvoyl prosthetic group on the alpha chain. During this reaction, the Ser that is part of the protease active site of the proenzyme becomes the pyruvoyl prosthetic group, which constitutes an essential element of the active site of the mature decarboxylase.

Its subcellular location is the mitochondrion inner membrane. It localises to the cytoplasm. It is found in the lipid droplet. It carries out the reaction a 1,2-diacyl-sn-glycero-3-phospho-L-serine + H(+) = a 1,2-diacyl-sn-glycero-3-phosphoethanolamine + CO2. It participates in phospholipid metabolism; phosphatidylethanolamine biosynthesis. Its function is as follows. Catalyzes the formation of phosphatidylethanolamine (PtdEtn) from phosphatidylserine (PtdSer). Plays a central role in phospholipid metabolism and in the interorganelle trafficking of phosphatidylserine. May be involved in lipid droplet biogenesis at the endoplasmic reticulum membrane. This Bos taurus (Bovine) protein is Phosphatidylserine decarboxylase proenzyme, mitochondrial.